The primary structure comprises 328 residues: DNA-directed RNA polymerase subunit alpha (328 aa).

Residues 1 to 234 (MQNSTTEFLK…DQMSIFADLQ (234 aa)) are alpha N-terminal domain (alpha-NTD). The alpha C-terminal domain (alpha-CTD) stretch occupies residues 248 to 328 (IDPVLLRPVD…AWPPVGLEKP (81 aa)).

Belongs to the RNA polymerase alpha chain family. As to quaternary structure, homodimer. The RNAP catalytic core consists of 2 alpha, 1 beta, 1 beta' and 1 omega subunit. When a sigma factor is associated with the core the holoenzyme is formed, which can initiate transcription.

The enzyme catalyses RNA(n) + a ribonucleoside 5'-triphosphate = RNA(n+1) + diphosphate. Functionally, DNA-dependent RNA polymerase catalyzes the transcription of DNA into RNA using the four ribonucleoside triphosphates as substrates. The chain is DNA-directed RNA polymerase subunit alpha from Neisseria meningitidis serogroup A / serotype 4A (strain DSM 15465 / Z2491).